Consider the following 295-residue polypeptide: Ribosomal RNA small subunit methyltransferase A (295 aa).

S-adenosyl-L-methionine is bound by residues asparagine 29, leucine 31, glycine 56, glutamate 77, aspartate 102, and asparagine 127.

The protein belongs to the class I-like SAM-binding methyltransferase superfamily. rRNA adenine N(6)-methyltransferase family. RsmA subfamily.

The protein localises to the cytoplasm. The catalysed reaction is adenosine(1518)/adenosine(1519) in 16S rRNA + 4 S-adenosyl-L-methionine = N(6)-dimethyladenosine(1518)/N(6)-dimethyladenosine(1519) in 16S rRNA + 4 S-adenosyl-L-homocysteine + 4 H(+). Its function is as follows. Specifically dimethylates two adjacent adenosines (A1518 and A1519) in the loop of a conserved hairpin near the 3'-end of 16S rRNA in the 30S particle. May play a critical role in biogenesis of 30S subunits. The protein is Ribosomal RNA small subunit methyltransferase A of Anoxybacillus flavithermus (strain DSM 21510 / WK1).